The following is a 247-amino-acid chain: GTP cyclohydrolase 1 type 2 homolog (247 aa).

The a divalent metal cation site is built by His63, His64, Asp101, His215, and Glu219.

The protein belongs to the GTP cyclohydrolase I type 2/NIF3 family. As to quaternary structure, homohexamer.

The chain is GTP cyclohydrolase 1 type 2 homolog from Yersinia pestis.